The chain runs to 219 residues: Adenylate kinase (219 aa).

10 to 15 lines the ATP pocket; it reads GAGKGT. Residues 30–59 are NMP; it reads STGDMLRAAVKAGTPLGQQAKKVMDAGELV. Residues Thr31, Arg36, 57–59, 85–88, and Gln92 each bind AMP; these read ELV and GFPR. The segment at 122-159 is LID; that stretch reads GRRVHPGSGRVYHVEHNPPKEEGKDDVTGEPLVQRDDD. ATP contacts are provided by residues Arg123 and 132-133; that span reads VY. Positions 129–152 are disordered; that stretch reads SGRVYHVEHNPPKEEGKDDVTGEP. Positions 133–152 are enriched in basic and acidic residues; that stretch reads YHVEHNPPKEEGKDDVTGEP. The AMP site is built by Arg156 and Arg167. Gly203 serves as a coordination point for ATP.

The protein belongs to the adenylate kinase family. In terms of assembly, monomer.

The protein resides in the cytoplasm. It carries out the reaction AMP + ATP = 2 ADP. It functions in the pathway purine metabolism; AMP biosynthesis via salvage pathway; AMP from ADP: step 1/1. Catalyzes the reversible transfer of the terminal phosphate group between ATP and AMP. Plays an important role in cellular energy homeostasis and in adenine nucleotide metabolism. The sequence is that of Adenylate kinase from Alkalilimnicola ehrlichii (strain ATCC BAA-1101 / DSM 17681 / MLHE-1).